We begin with the raw amino-acid sequence, 152 residues long: MSLRPCFVSLIDESDKPILIYVPNEAENEMNDVLKYNVLSNISLDYFESALVEWHSLDSKPLLKSIFQLEGVSVFAMLIKQTGLKIVIGFEQKSLSGADDEFEAINQIFETVRKIYIRVKCNPLLVSGDEKSIIKSLERKFDELFISTEVEL.

The protein belongs to the TRAPP small subunits family. Sedlin subfamily. In terms of assembly, interacts with the TRAPP II complex; TRAPP II subunits TRS33 and TRS65 are required for this interaction.

Its subcellular location is the golgi apparatus. It is found in the trans-Golgi network. Required, together with the TRAPP II subunit TRS33, for TRAPP II complex assembly or stability, and for proper Golgi localization of TRAPP and the Rab GTPase YPT31. The sequence is that of TRAPP-associated protein TCA17 (TCA17) from Saccharomyces cerevisiae (strain ATCC 204508 / S288c) (Baker's yeast).